Here is a 232-residue protein sequence, read N- to C-terminus: Large ribosomal subunit protein uL1 (232 aa).

It belongs to the universal ribosomal protein uL1 family. Part of the 50S ribosomal subunit.

Its function is as follows. Binds directly to 23S rRNA. The L1 stalk is quite mobile in the ribosome, and is involved in E site tRNA release. Protein L1 is also a translational repressor protein, it controls the translation of the L11 operon by binding to its mRNA. This Ruegeria sp. (strain TM1040) (Silicibacter sp.) protein is Large ribosomal subunit protein uL1.